The following is a 27-amino-acid chain: uncharacterized protein (27 aa).

The helical transmembrane segment at 3-23 (IILWAVLIIFLIGLLVVTGVF) threads the bilayer.

It is found in the cell inner membrane. This is an uncharacterized protein from Escherichia coli (strain K12).